The primary structure comprises 387 residues: Protein mab-21-like 3 (387 aa).

This sequence belongs to the mab-21 family.

This chain is Protein mab-21-like 3 (mab21L3), found in Danio rerio (Zebrafish).